Here is a 202-residue protein sequence, read N- to C-terminus: Syndecan-4 (202 aa).

The signal sequence occupies residues 1 to 22 (MASPRLLALLLLLVGAFNAAAA). Residues 23–152 (ESIRETEVIN…NIFERTEVLS (130 aa)) are Extracellular-facing. Disordered stretches follow at residues 41 to 75 (YFSG…GPED) and 87 to 112 (VPLD…ELEE). A glycan (O-linked (Xyl...) (glycosaminoglycan) serine) is linked at Ser43. Over residues 46 to 63 (LPDDEDVGGPGQEPDDFE) the composition is skewed to acidic residues. 2 O-linked (Xyl...) (glycosaminoglycan) serine glycosylation sites follow: Ser65 and Ser67. A helical membrane pass occupies residues 153–173 (ALIVGGIVGILFAVFLVLLLV). Residues 174-202 (YRMKKKDEGSYDLGKKPIYKKAPTNEFYA) are Cytoplasmic-facing.

Belongs to the syndecan proteoglycan family. Homodimer. Interacts with CDCP1 and SDCBP. Interacts (via its cytoplasmic domain) with GIPC (via its PDZ domain). Interacts (via its cytoplasmic domain) with NUDT16L1. Interacts with DNM2; this interaction is markedly enhanced at focal ahesion site upon induction of focal adhesions and stress-fiber formation. In terms of processing, shedding, cleavage of the extracellular domain to release a soluble form, is enhanced by a number of factors such as heparanase, growth factor receptor action for example by thrombin or EGF. Physiological events such as stress or wound healing can activate the shedding. PMA-mediated shedding is inhibited by TIMP3. O-glycosylated; contains both chondroitin sulfate and heparan sulfate. Ser-43, Ser-65 and Ser-67 can all be modified by either chondroitin sulfate or heparan sulfate, and the protein exists in forms that contain only chondroitin sulfate, only heparan sulfate and both chondroitin sulfate and heparan sulfate.

It is found in the membrane. It localises to the secreted. In terms of biological role, cell surface proteoglycan which regulates exosome biogenesis in concert with SDCBP and PDCD6IP. This is Syndecan-4 from Sus scrofa (Pig).